The following is a 2696-amino-acid chain: Histone-lysine N-methyltransferase, H3 lysine-36 specific (2696 aa).

S117 is subject to Phosphoserine. 2 disordered regions span residues 207–252 (MGSE…EKAA) and 281–311 (DPDS…PFCQ). Residues 236-248 (QKNKQRNEVDGSN) show a composition bias toward basic and acidic residues. Composition is skewed to polar residues over residues 281–290 (DPDSSTSTLG) and 297–306 (GTSSSSTSQE). The PWWP 1 domain maps to 323–388 (VGDLIWAKFK…AGKAIVMFEG (66 aa)). 2 positions are modified to phosphoserine: S483 and S486. The interval 487 to 514 (ADEKEKPCAKSRARKSSDNPKRTSVKKG) is disordered. S766 bears the Phosphoserine mark. A disordered region spans residues 872–891 (LGEDVSDSGTSKPSKPLLFS). Residue K906 forms a Glycyl lysine isopeptide (Lys-Gly) (interchain with G-Cter in SUMO2) linkage. Disordered regions lie at residues 936-1035 (YRSP…DAFS), 1067-1093 (VLQG…PLQI), 1112-1134 (SKVK…NGKG), 1243-1272 (SIGD…SEKK), 1294-1344 (PKKK…EPPV), 1382-1428 (SPRP…KKGD), and 1480-1534 (KMQC…MQGE). Positions 948–961 (SPVGVSKVLVSGGS) are enriched in low complexity. The segment covering 971–982 (GTQNSANPSPSG) has biased composition (polar residues). Composition is skewed to basic and acidic residues over residues 1000 to 1017 (SDKR…DCVT), 1070 to 1090 (GDRE…KEDP), and 1112 to 1124 (SKVK…KISE). The span at 1300–1314 (KVQEQVHKVSSRCEE) shows a compositional bias: basic and acidic residues. Residues 1323 to 1337 (SSAQNKQVDENSLIS) are compositionally biased toward polar residues. A Glycyl lysine isopeptide (Lys-Gly) (interchain with G-Cter in SUMO2) cross-link involves residue K1339. Residue S1510 is modified to Phosphoserine. The segment covering 1513–1523 (ETVEEGVEHDP) has biased composition (basic and acidic residues). PHD-type zinc fingers lie at residues 1543–1589 (ENVC…CRTG), 1590–1646 (IHTC…CHAA), and 1707–1751 (VSWC…CKAG). One can recognise a PWWP 2 domain in the interval 1756–1818 (YREIVWVKVG…QARVFPYMEG (63 aa)). The region spanning 1890 to 1940 (SEIPRCNCKATDENPCGIDSECINRMLLYECHPTVCPAGGRCQNQCFSKRQ) is the AWS domain. Residues 1942 to 2059 (PEVEIFRTLQ…AGTELTFNYN (118 aa)) form the SET domain. Residues 1952–1954 (RGW), 1994–1997 (TNFY), 2020–2021 (NH), N2065, and K2071 each bind S-adenosyl-L-methionine. The interval 2060-2066 (LECLGNG) is inhibits enzyme activity in the absence of bound histone. In terms of domain architecture, Post-SET spans 2066–2082 (GKTVCKCGAPNCSGFLG). The disordered stretch occupies residues 2091 to 2111 (ATEEKSKKFKKKQQGKRRTQG). Residues 2097-2108 (KKFKKKQQGKRR) are compositionally biased toward basic residues. The PHD-type 4; atypical zinc finger occupies 2118–2165 (EDECFSCGDAGQLVSCKKPGCPKVYHADCLNLTKRPAGKWECPWHQCD). The segment at 2213–2422 (LEPGEIREYV…SLSQRLPPPE (210 aa)) is disordered. Positions 2222–2232 (VPPPVPLPPGP) are enriched in pro residues. The span at 2281–2298 (RPLERTDSRPQPLDKVRD) shows a compositional bias: basic and acidic residues. The span at 2303–2314 (GTKSQSLVSSQR) shows a compositional bias: polar residues. Residues 2330–2348 (SDKPSPVTSPSSSPSVRSQ) show a composition bias toward low complexity. Residue S2369 is modified to Phosphoserine. 2 stretches are compositionally biased toward polar residues: residues 2371 to 2381 (RPQSLEKTSVP) and 2394 to 2404 (ITSSPKPQTSD). T2462 bears the Phosphothreonine mark. Disordered stretches follow at residues 2464-2499 (RQKE…GLGH), 2553-2575 (TQAS…QSPG), 2595-2616 (KSGQ…EEKK), and 2665-2696 (LGRG…SEQK). The residue at position 2471 (S2471) is a Phosphoserine. K2616 is covalently cross-linked (Glycyl lysine isopeptide (Lys-Gly) (interchain with G-Cter in SUMO2)). Polar residues predominate over residues 2674–2686 (EQNTLPALNQAPS).

This sequence belongs to the class V-like SAM-binding methyltransferase superfamily. As to quaternary structure, interacts with the ligand-binding domains of RARA and THRA in the absence of ligand; in the presence of ligand the interaction is severely disrupted but some binding still occurs. Interacts with the ligand-binding domains of RXRA and ESRRA only in the presence of ligand. Interacts with ZNF496. Interacts with AR DNA- and ligand-binding domains. In terms of tissue distribution, expressed in the fetal/adult brain, kidney, skeletal muscle, spleen, and the thymus, and faintly in the lung.

The protein resides in the nucleus. Its subcellular location is the chromosome. The catalysed reaction is L-lysyl(36)-[histone H3] + 2 S-adenosyl-L-methionine = N(6),N(6)-dimethyl-L-lysyl(36)-[histone H3] + 2 S-adenosyl-L-homocysteine + 2 H(+). Its function is as follows. Histone methyltransferase that dimethylates Lys-36 of histone H3 (H3K36me2). Transcriptional intermediary factor capable of both negatively or positively influencing transcription, depending on the cellular context. This chain is Histone-lysine N-methyltransferase, H3 lysine-36 specific (NSD1), found in Homo sapiens (Human).